Consider the following 553-residue polypeptide: Arylsulfatase K (553 aa).

The signal sequence occupies residues 1 to 16; that stretch reads MLLLLVSVVAALALAA. Ca(2+) contacts are provided by D40 and C80. Catalysis depends on C80, which acts as the Nucleophile. A 3-oxoalanine (Cys) modification is found at C80. An N-linked (GlcNAc...) asparagine glycan is attached at N108. K128 is a binding site for substrate. N-linked (GlcNAc...) asparagine glycosylation is present at N191. H249 is a substrate binding site. N260 is a glycosylation site (N-linked (GlcNAc...) asparagine). Positions 311 and 312 each coordinate Ca(2+). 3 N-linked (GlcNAc...) asparagine glycosylation sites follow: N373, N411, and N496. Residues 530 to 553 form a disordered region; the sequence is SPLASSPTQSTSGSQPTLPQSTSG. Positions 534–553 are enriched in low complexity; sequence SSPTQSTSGSQPTLPQSTSG.

The protein belongs to the sulfatase family. Requires Ca(2+) as cofactor. In terms of processing, the conversion to 3-oxoalanine (also known as C-formylglycine, FGly), of a serine or cysteine residue in prokaryotes and of a cysteine residue in eukaryotes, is critical for catalytic activity. The 75-kDa precursor undergoes proteolytic processing to yield a 23 kDa form. Post-translationally, N-glycosylated with both high mannose and complex type sugars.

It is found in the secreted. The protein localises to the lysosome. The enzyme catalyses an aryl sulfate + H2O = a phenol + sulfate + H(+). It catalyses the reaction Hydrolysis of the 2-sulfate groups of the 2-O-sulfo-D-glucuronate residues of chondroitin sulfate, heparin and heparitin sulfate.. In terms of biological role, catalyzes the hydrolysis of pseudosubstrates such as p-nitrocatechol sulfate and p-nitrophenyl sulfate. Catalyzes the hydrolysis of the 2-sulfate groups of the 2-O-sulfo-D-glucuronate residues of chondroitin sulfate, heparin and heparitin sulfate. Acts selectively on 2-sulfoglucuronate and lacks activity against 2-sulfoiduronate. The polypeptide is Arylsulfatase K (Arsk) (Mus musculus (Mouse)).